The chain runs to 368 residues: tRNA-specific 2-thiouridylase MnmA (368 aa).

ATP-binding positions include 10-17 and M36; that span reads AMSGGVDS. C108 functions as the Nucleophile in the catalytic mechanism. An intrachain disulfide couples C108 to C206. ATP is bound at residue G132. The interaction with tRNA stretch occupies residues 156–158; that stretch reads KDQ. C206 serves as the catalytic Cysteine persulfide intermediate. An interaction with tRNA region spans residues 312 to 313; sequence RY.

It belongs to the MnmA/TRMU family.

Its subcellular location is the cytoplasm. The catalysed reaction is S-sulfanyl-L-cysteinyl-[protein] + uridine(34) in tRNA + AH2 + ATP = 2-thiouridine(34) in tRNA + L-cysteinyl-[protein] + A + AMP + diphosphate + H(+). Functionally, catalyzes the 2-thiolation of uridine at the wobble position (U34) of tRNA, leading to the formation of s(2)U34. The sequence is that of tRNA-specific 2-thiouridylase MnmA from Natranaerobius thermophilus (strain ATCC BAA-1301 / DSM 18059 / JW/NM-WN-LF).